We begin with the raw amino-acid sequence, 213 residues long: Superoxide dismutase [Fe] (213 aa).

4 residues coordinate Fe cation: H26, H73, D156, and H160.

Belongs to the iron/manganese superoxide dismutase family. As to quaternary structure, homodimer. Fe cation serves as cofactor.

It catalyses the reaction 2 superoxide + 2 H(+) = H2O2 + O2. In terms of biological role, destroys superoxide anion radicals which are normally produced within the cells and which are toxic to biological systems. This is Superoxide dismutase [Fe] (sodB) from Helicobacter pylori (strain J99 / ATCC 700824) (Campylobacter pylori J99).